A 229-amino-acid polypeptide reads, in one-letter code: Potassium/proton antiporter CemA (229 aa).

The next 3 helical transmembrane spans lie at phenylalanine 7 to phenylalanine 27, isoleucine 107 to glycine 127, and isoleucine 189 to isoleucine 209.

The protein belongs to the CemA family.

The protein localises to the plastid. It localises to the chloroplast inner membrane. It carries out the reaction K(+)(in) + H(+)(out) = K(+)(out) + H(+)(in). Functionally, contributes to K(+)/H(+) antiport activity by supporting proton efflux to control proton extrusion and homeostasis in chloroplasts in a light-dependent manner to modulate photosynthesis. Prevents excessive induction of non-photochemical quenching (NPQ) under continuous-light conditions. Indirectly promotes efficient inorganic carbon uptake into chloroplasts. This Helianthus annuus (Common sunflower) protein is Potassium/proton antiporter CemA.